Reading from the N-terminus, the 462-residue chain is Argininosuccinate lyase (462 aa).

This sequence belongs to the lyase 1 family. Argininosuccinate lyase subfamily.

The protein localises to the cytoplasm. The catalysed reaction is 2-(N(omega)-L-arginino)succinate = fumarate + L-arginine. It functions in the pathway amino-acid biosynthesis; L-arginine biosynthesis; L-arginine from L-ornithine and carbamoyl phosphate: step 3/3. The polypeptide is Argininosuccinate lyase (Prochlorococcus marinus (strain SARG / CCMP1375 / SS120)).